The following is a 479-amino-acid chain: RAC-gamma serine/threonine-protein kinase (479 aa).

The residue at position 2 (S2) is an N-acetylserine. In terms of domain architecture, PH spans 5 to 107; that stretch reads TIVKEDWVQK…WTEAIQAVAD (103 aa). C59 and C76 form a disulfide bridge. The region spanning 148 to 405 is the Protein kinase domain; it reads FDYLKLLGKG…PKEIMRHSFF (258 aa). ATP is bound by residues 154–162 and K177; that span reads LGKGTFGKV. D271 serves as the catalytic Proton acceptor. A disulfide bond links C293 and C307. The O-linked (GlcNAc) threonine glycan is linked to T302. Position 305 is a phosphothreonine; by PDPK1 (T305). T309 carries an O-linked (GlcNAc) threonine glycan. The region spanning 406–479 is the AGC-kinase C-terminal domain; the sequence is SGVNWQDVYD…QFSYSASGRE (74 aa). Positions 446-479 are disordered; sequence ITPPEKDDDDGMDCMDNERRPHFPQFSYSASGRE. T447 carries the phosphothreonine modification. The span at 451 to 460 shows a compositional bias: acidic residues; sequence KDDDDGMDCM. S472 is subject to Phosphoserine; by PKC/PRKCZ. O-linked (GlcNAc) serine; alternate glycosylation occurs at S472.

This sequence belongs to the protein kinase superfamily. AGC Ser/Thr protein kinase family. RAC subfamily. In terms of assembly, interacts (via PH domain) with TCL1A; this enhances AKT3 phosphorylation and activation. Interacts with TRAF6. Interacts with KCTD20. Interacts with BTBD10. Phosphorylation on Thr-305 and Ser-472 is required for full activity. Phosphorylation of the activation loop at Thr-305 by PDPK1/PDK1 is a prerequisite for full activation. Phosphorylation at Ser-472 by mTORC2 in response to growth factors plays a key role in AKT1 activation by facilitating subsequent phosphorylation of the activation loop by PDPK1/PDK1. In terms of processing, ubiquitinated. When fully phosphorylated and translocated into the nucleus, undergoes 'Lys-48'-polyubiquitination catalyzed by TTC3, leading to its degradation by the proteasome. Post-translationally, O-GlcNAcylation at Thr-302 and Thr-309 inhibits activating phosphorylation at Thr-305 via disrupting the interaction between AKT and PDPK1/PDK1.

Its subcellular location is the nucleus. It is found in the cytoplasm. The protein localises to the membrane. It catalyses the reaction L-seryl-[protein] + ATP = O-phospho-L-seryl-[protein] + ADP + H(+). It carries out the reaction L-threonyl-[protein] + ATP = O-phospho-L-threonyl-[protein] + ADP + H(+). With respect to regulation, two specific sites, one in the kinase domain (Thr-305) and the other in the C-terminal regulatory region (Ser-472), need to be phosphorylated for its full activation. IGF-1 leads to the activation of AKT3, which may play a role in regulating cell survival. AKT3 is one of 3 closely related serine/threonine-protein kinases (AKT1, AKT2 and AKT3) called the AKT kinase, and which regulate many processes including metabolism, proliferation, cell survival, growth and angiogenesis. This is mediated through serine and/or threonine phosphorylation of a range of downstream substrates. Over 100 substrate candidates have been reported so far, but for most of them, no isoform specificity has been reported. AKT3 is the least studied AKT isoform. It plays an important role in brain development and is crucial for the viability of malignant glioma cells. AKT3 isoform may also be the key molecule in up-regulation and down-regulation of MMP13 via IL13. Required for the coordination of mitochondrial biogenesis with growth factor-induced increases in cellular energy demands. Down-regulation by RNA interference reduces the expression of the phosphorylated form of BAD, resulting in the induction of caspase-dependent apoptosis. In Rattus norvegicus (Rat), this protein is RAC-gamma serine/threonine-protein kinase (Akt3).